We begin with the raw amino-acid sequence, 366 residues long: Transcription factor MYB28 (366 aa).

2 consecutive HTH myb-type domains span residues 9-61 (GEGL…TNYL) and 62-116 (KPEI…KKRL). DNA-binding regions (H-T-H motif) lie at residues 37–61 (WRDI…TNYL) and 89–112 (WSVI…NTHL). A disordered region spans residues 124 to 170 (VTHKPLASSSNPTVDENLNSPNASSSDKQYSRSSSMPFLSRPPPSSC). Residues 130–146 (ASSSNPTVDENLNSPNA) are compositionally biased toward polar residues. The segment covering 147 to 158 (SSSDKQYSRSSS) has biased composition (low complexity).

Can form complexes with MYC2, MYC3 or MYC4. As to expression, expressed in generative organs, mature leaves and trichomes.

The protein resides in the nucleus. Functionally, major regulator of short-chained aliphatic glucosinolates (GLSs) biosynthesis. Together with MYB29/HAG3 and MYB76/HAG2, promotes aliphatic glucosinolate biosynthesis but represses indolic glucosinolate biosynthesis. Prevents insect performance (e.g. lepidopteran insect Mamestra brassicae and Spodoptera exigua) by promoting glucosinolates. The chain is Transcription factor MYB28 (MYB28) from Arabidopsis thaliana (Mouse-ear cress).